We begin with the raw amino-acid sequence, 350 residues long: Biotin synthase (350 aa).

Positions 54 to 278 (REIQLSTLLS…TMPQSYVRLS (225 aa)) constitute a Radical SAM core domain. Residues cysteine 69, cysteine 73, and cysteine 76 each contribute to the [4Fe-4S] cluster site. Residues cysteine 113, cysteine 144, cysteine 204, and arginine 276 each coordinate [2Fe-2S] cluster.

The protein belongs to the radical SAM superfamily. Biotin synthase family. As to quaternary structure, homodimer. [4Fe-4S] cluster serves as cofactor. [2Fe-2S] cluster is required as a cofactor.

It carries out the reaction (4R,5S)-dethiobiotin + (sulfur carrier)-SH + 2 reduced [2Fe-2S]-[ferredoxin] + 2 S-adenosyl-L-methionine = (sulfur carrier)-H + biotin + 2 5'-deoxyadenosine + 2 L-methionine + 2 oxidized [2Fe-2S]-[ferredoxin]. It participates in cofactor biosynthesis; biotin biosynthesis; biotin from 7,8-diaminononanoate: step 2/2. In terms of biological role, catalyzes the conversion of dethiobiotin (DTB) to biotin by the insertion of a sulfur atom into dethiobiotin via a radical-based mechanism. This is Biotin synthase from Neisseria meningitidis serogroup A / serotype 4A (strain DSM 15465 / Z2491).